A 473-amino-acid polypeptide reads, in one-letter code: Photosystem II CP43 reaction center protein (473 aa).

A propeptide spanning residues 1 to 14 is cleaved from the precursor; it reads MKILYSLRRFYHVE. Position 15 is an N-acetylthreonine (threonine 15). Threonine 15 carries the post-translational modification Phosphothreonine. Transmembrane regions (helical) follow at residues 69–93, 134–155, 178–200, 255–275, and 291–312; these read LFEV…PHLA, LLGP…KDRN, KALY…RKIT, KPFA…LSYS, and WFNN…ASQA. [CaMn4O5] cluster is bound at residue glutamate 367. Residues 447–471 form a helical membrane-spanning segment; sequence RARAAAAGFEKGIDRDLEPVLYMTP.

This sequence belongs to the PsbB/PsbC family. PsbC subfamily. As to quaternary structure, PSII is composed of 1 copy each of membrane proteins PsbA, PsbB, PsbC, PsbD, PsbE, PsbF, PsbH, PsbI, PsbJ, PsbK, PsbL, PsbM, PsbT, PsbX, PsbY, PsbZ, Psb30/Ycf12, at least 3 peripheral proteins of the oxygen-evolving complex and a large number of cofactors. It forms dimeric complexes. It depends on Binds multiple chlorophylls and provides some of the ligands for the Ca-4Mn-5O cluster of the oxygen-evolving complex. It may also provide a ligand for a Cl- that is required for oxygen evolution. PSII binds additional chlorophylls, carotenoids and specific lipids. as a cofactor.

The protein resides in the plastid. Its subcellular location is the chloroplast thylakoid membrane. Functionally, one of the components of the core complex of photosystem II (PSII). It binds chlorophyll and helps catalyze the primary light-induced photochemical processes of PSII. PSII is a light-driven water:plastoquinone oxidoreductase, using light energy to abstract electrons from H(2)O, generating O(2) and a proton gradient subsequently used for ATP formation. This Oryza nivara (Indian wild rice) protein is Photosystem II CP43 reaction center protein.